The sequence spans 504 residues: Histidine--tRNA ligase (504 aa).

It belongs to the class-II aminoacyl-tRNA synthetase family. As to quaternary structure, homodimer.

It localises to the cytoplasm. The catalysed reaction is tRNA(His) + L-histidine + ATP = L-histidyl-tRNA(His) + AMP + diphosphate + H(+). This chain is Histidine--tRNA ligase, found in Rhizobium rhizogenes (strain K84 / ATCC BAA-868) (Agrobacterium radiobacter).